The following is a 476-amino-acid chain: Bifunctional protein HldE (476 aa).

Residues 1-318 are ribokinase; it reads MAQYSAEFKQ…ENAIHARPET (318 aa). Position 195–198 (195–198) interacts with ATP; sequence NMSE. D264 is a catalytic residue. The interval 344-476 is cytidylyltransferase; it reads MTNGCFDILH…VIEKIKLLKD (133 aa).

This sequence in the N-terminal section; belongs to the carbohydrate kinase PfkB family. In the C-terminal section; belongs to the cytidylyltransferase family. Homodimer.

It carries out the reaction D-glycero-beta-D-manno-heptose 7-phosphate + ATP = D-glycero-beta-D-manno-heptose 1,7-bisphosphate + ADP + H(+). The enzyme catalyses D-glycero-beta-D-manno-heptose 1-phosphate + ATP + H(+) = ADP-D-glycero-beta-D-manno-heptose + diphosphate. It participates in nucleotide-sugar biosynthesis; ADP-L-glycero-beta-D-manno-heptose biosynthesis; ADP-L-glycero-beta-D-manno-heptose from D-glycero-beta-D-manno-heptose 7-phosphate: step 1/4. It functions in the pathway nucleotide-sugar biosynthesis; ADP-L-glycero-beta-D-manno-heptose biosynthesis; ADP-L-glycero-beta-D-manno-heptose from D-glycero-beta-D-manno-heptose 7-phosphate: step 3/4. Functionally, catalyzes the phosphorylation of D-glycero-D-manno-heptose 7-phosphate at the C-1 position to selectively form D-glycero-beta-D-manno-heptose-1,7-bisphosphate. In terms of biological role, catalyzes the ADP transfer from ATP to D-glycero-beta-D-manno-heptose 1-phosphate, yielding ADP-D-glycero-beta-D-manno-heptose. This Haemophilus influenzae (strain PittGG) protein is Bifunctional protein HldE.